The following is a 634-amino-acid chain: Endoribonuclease rege-1 (634 aa).

3 disordered regions span residues 1 to 33 (MDST…STPH), 90 to 113 (SHPS…APMI), and 156 to 223 (KMGL…NPDP). Basic and acidic residues predominate over residues 97 to 106 (ESSDPSKIDD). 2 stretches are compositionally biased toward low complexity: residues 182–194 (SSAS…SSSS) and 201–217 (SVSI…STPS). The region spanning 225–377 (LRAVVVDGSN…PSGRHGPRIE (153 aa)) is the RNase NYN domain. Position 314 (Asp314) interacts with Mg(2+). The C3H1-type zinc finger occupies 387-412 (SSNPLVCPYARKCTYGNKCKFYHPER).

This sequence belongs to the ZC3H12 family. Mg(2+) is required as a cofactor. In terms of tissue distribution, expressed in the intestinal cells adjacent to the pharynx.

Its subcellular location is the cytoplasm. Functionally, endonuclease which binds to the 3'UTR of target mRNAs and induces degradation of the transcript. Acts together with rle-1 to repress the expression of the transcription factor ets-4 by binding to the conserved ADE (alternate decay element) and RCE (REGE-1 cleavage element) stem loop structure in its 3'UTR, which controls the expression of genes in the IIS and TORC1 pathways, including those involved in lipid metabolism and autophagosome formation. May play a role in the clearance of apoptotic cell corpses. This chain is Endoribonuclease rege-1, found in Caenorhabditis elegans.